We begin with the raw amino-acid sequence, 159 residues long: Deoxyuridine 5'-triphosphate nucleotidohydrolase (159 aa).

Residues 78–80, Asn-91, 95–97, and Met-105 each bind substrate; these read RSG and LID.

Belongs to the dUTPase family. Mg(2+) is required as a cofactor.

The catalysed reaction is dUTP + H2O = dUMP + diphosphate + H(+). Its pathway is pyrimidine metabolism; dUMP biosynthesis; dUMP from dCTP (dUTP route): step 2/2. Functionally, this enzyme is involved in nucleotide metabolism: it produces dUMP, the immediate precursor of thymidine nucleotides and it decreases the intracellular concentration of dUTP so that uracil cannot be incorporated into DNA. In Buchnera aphidicola subsp. Schizaphis graminum (strain Sg), this protein is Deoxyuridine 5'-triphosphate nucleotidohydrolase.